Consider the following 217-residue polypeptide: ATP phosphoribosyltransferase (217 aa).

It belongs to the ATP phosphoribosyltransferase family. Short subfamily. As to quaternary structure, heteromultimer composed of HisG and HisZ subunits.

It localises to the cytoplasm. It catalyses the reaction 1-(5-phospho-beta-D-ribosyl)-ATP + diphosphate = 5-phospho-alpha-D-ribose 1-diphosphate + ATP. The protein operates within amino-acid biosynthesis; L-histidine biosynthesis; L-histidine from 5-phospho-alpha-D-ribose 1-diphosphate: step 1/9. Functionally, catalyzes the condensation of ATP and 5-phosphoribose 1-diphosphate to form N'-(5'-phosphoribosyl)-ATP (PR-ATP). Has a crucial role in the pathway because the rate of histidine biosynthesis seems to be controlled primarily by regulation of HisG enzymatic activity. This Burkholderia multivorans (strain ATCC 17616 / 249) protein is ATP phosphoribosyltransferase.